A 276-amino-acid chain; its full sequence is ESX-2 secretion-associated protein EspG2 (276 aa).

This sequence belongs to the EspG family. Interacts specifically with ESX-2-dependent PE/PPE proteins.

It localises to the cytoplasm. Specific chaperone for cognate PE/PPE proteins. Plays an important role in preventing aggregation of PE/PPE dimers. In Mycobacterium tuberculosis (strain CDC 1551 / Oshkosh), this protein is ESX-2 secretion-associated protein EspG2.